The following is a 185-amino-acid chain: Ribosome-recycling factor (185 aa).

The protein belongs to the RRF family.

The protein resides in the cytoplasm. Responsible for the release of ribosomes from messenger RNA at the termination of protein biosynthesis. May increase the efficiency of translation by recycling ribosomes from one round of translation to another. The sequence is that of Ribosome-recycling factor from Frankia alni (strain DSM 45986 / CECT 9034 / ACN14a).